Consider the following 1016-residue polypeptide: Enhancer of polycomb-like protein 1 (1016 aa).

Disordered regions lie at residues 1–50 (MAIH…NDLE), 96–119 (LLGS…DASV), 450–488 (KEED…TIGT), 499–518 (GQVH…VKLP), and 842–1016 (ARMR…PNRK). The span at 35 to 50 (YKQSDLPTLNASNDLE) shows a compositional bias: polar residues. Composition is skewed to basic and acidic residues over residues 103–116 (DGDK…KKTD) and 457–473 (ESSK…DSSR). Polar residues predominate over residues 475–488 (GSATSMPGSATIGT). The span at 842–883 (ARMRTLQQQQRNNKQQAAGQSSGSSSASLGSNTNSNSSISGQ) shows a compositional bias: low complexity. The span at 884–902 (ADQGQTNLTNSGITRQGGA) shows a compositional bias: polar residues. Low complexity predominate over residues 904 to 923 (VNGSQTSTTNNTRSSVSGGS). Residues 928 to 956 (LPTQSSQRSNTNSPLLASQPQGYSQQQKF) are compositionally biased toward polar residues. Residues 960 to 971 (PPTSQSQSQSPT) are compositionally biased toward low complexity. The segment covering 976-994 (QLQTSKMYNKHGSNITPSN) has biased composition (polar residues).

This sequence belongs to the enhancer of polycomb family. Component of the NuA4 histone acetyltransferase complex.

It is found in the nucleus. Functionally, component of the NuA4 histone acetyltransferase complex which is involved in transcriptional activation of selected genes principally by acetylation of nucleosomal histone H4 and H2A. The NuA4 complex is also involved in DNA repair. Involved in gene silencing by neighboring heterochromatin, blockage of the silencing spreading along the chromosome, and required for cell cycle progression through G2/M. This is Enhancer of polycomb-like protein 1 (EPL1) from Debaryomyces hansenii (strain ATCC 36239 / CBS 767 / BCRC 21394 / JCM 1990 / NBRC 0083 / IGC 2968) (Yeast).